Reading from the N-terminus, the 137-residue chain is Nucleoside diphosphate kinase (137 aa).

The ATP site is built by Lys10, Phe58, Arg86, Thr92, Arg103, and Asn113. His116 acts as the Pros-phosphohistidine intermediate in catalysis.

Belongs to the NDK family. Homotetramer. Mg(2+) is required as a cofactor.

It is found in the cytoplasm. The enzyme catalyses a 2'-deoxyribonucleoside 5'-diphosphate + ATP = a 2'-deoxyribonucleoside 5'-triphosphate + ADP. The catalysed reaction is a ribonucleoside 5'-diphosphate + ATP = a ribonucleoside 5'-triphosphate + ADP. Functionally, major role in the synthesis of nucleoside triphosphates other than ATP. The ATP gamma phosphate is transferred to the NDP beta phosphate via a ping-pong mechanism, using a phosphorylated active-site intermediate. This Helicobacter acinonychis (strain Sheeba) protein is Nucleoside diphosphate kinase.